The following is a 260-amino-acid chain: Resolvase (260 aa).

A Tyr recombinase domain is found at 38–241 (ELPKYLLAPE…FALDVAARHR (204 aa)). Catalysis depends on residues R73, K105, H193, R196, and H219. The O-(3'-phospho-DNA)-tyrosine intermediate role is filled by Y228.

This sequence belongs to the 'phage' integrase family.

Functionally, this resolvase acts at the RfsF equivalent resolution sequence of pColBM-CL139. The chain is Resolvase (resD) from Escherichia coli.